Reading from the N-terminus, the 262-residue chain is Small ribosomal subunit protein eS1 (262 aa).

This sequence belongs to the eukaryotic ribosomal protein eS1 family. In terms of assembly, component of the small ribosomal subunit. Mature ribosomes consist of a small (40S) and a large (60S) subunit. The 40S subunit contains about 33 different proteins and 1 molecule of RNA (18S). The 60S subunit contains about 49 different proteins and 3 molecules of RNA (25S, 5.8S and 5S).

The protein localises to the cytoplasm. This Cryptosporidium hominis protein is Small ribosomal subunit protein eS1.